We begin with the raw amino-acid sequence, 445 residues long: UPF0210 protein SPG_0223 (445 aa).

The protein belongs to the UPF0210 family. In terms of assembly, homodimer.

The chain is UPF0210 protein SPG_0223 from Streptococcus pneumoniae serotype 19F (strain G54).